The sequence spans 320 residues: Cytochrome f (320 aa).

The signal sequence occupies residues 1–35 (MENKNTFSWVKEQMTRSISVSIMIYVITQTSISNA). Residues Y36, C56, C59, and H60 each contribute to the heme site. The chain crosses the membrane as a helical span at residues 286 to 306 (VQGLLFFFASVILAQVFLVLK).

Belongs to the cytochrome f family. As to quaternary structure, the 4 large subunits of the cytochrome b6-f complex are cytochrome b6, subunit IV (17 kDa polypeptide, petD), cytochrome f and the Rieske protein, while the 4 small subunits are PetG, PetL, PetM and PetN. The complex functions as a dimer. Requires heme as cofactor.

It localises to the plastid. Its subcellular location is the chloroplast thylakoid membrane. In terms of biological role, component of the cytochrome b6-f complex, which mediates electron transfer between photosystem II (PSII) and photosystem I (PSI), cyclic electron flow around PSI, and state transitions. The polypeptide is Cytochrome f (Lolium perenne (Perennial ryegrass)).